A 374-amino-acid chain; its full sequence is Dual-specificity RNA methyltransferase RlmN (374 aa).

Catalysis depends on E94, which acts as the Proton acceptor. In terms of domain architecture, Radical SAM core spans 100–339 (EEDRATLCVS…VTIRKTRGDD (240 aa)). Cysteines 107 and 344 form a disulfide. 3 residues coordinate [4Fe-4S] cluster: C114, C118, and C121. Residues 168–169 (GE), S200, 222–224 (SLH), and N301 contribute to the S-adenosyl-L-methionine site. C344 (S-methylcysteine intermediate) is an active-site residue.

This sequence belongs to the radical SAM superfamily. RlmN family. [4Fe-4S] cluster is required as a cofactor.

It localises to the cytoplasm. The catalysed reaction is adenosine(2503) in 23S rRNA + 2 reduced [2Fe-2S]-[ferredoxin] + 2 S-adenosyl-L-methionine = 2-methyladenosine(2503) in 23S rRNA + 5'-deoxyadenosine + L-methionine + 2 oxidized [2Fe-2S]-[ferredoxin] + S-adenosyl-L-homocysteine. The enzyme catalyses adenosine(37) in tRNA + 2 reduced [2Fe-2S]-[ferredoxin] + 2 S-adenosyl-L-methionine = 2-methyladenosine(37) in tRNA + 5'-deoxyadenosine + L-methionine + 2 oxidized [2Fe-2S]-[ferredoxin] + S-adenosyl-L-homocysteine. In terms of biological role, specifically methylates position 2 of adenine 2503 in 23S rRNA and position 2 of adenine 37 in tRNAs. m2A2503 modification seems to play a crucial role in the proofreading step occurring at the peptidyl transferase center and thus would serve to optimize ribosomal fidelity. This is Dual-specificity RNA methyltransferase RlmN from Vibrio vulnificus (strain YJ016).